The primary structure comprises 268 residues: Putative hydro-lyase ABAYE2440 (268 aa).

The protein belongs to the D-glutamate cyclase family.

The protein is Putative hydro-lyase ABAYE2440 of Acinetobacter baumannii (strain AYE).